The chain runs to 550 residues: MSFSLASTLPAWQAVQTHYESVGKHLVLKELFAKDSSRFEKFSFTFNGLKEEDGPILFDFSKNLITEETVELLVKLAKEANVEGLRDALFAGEHINFTEDRAVFHPALRNVSEKPMKVNGQDVMPGVRKVLRHMKEFSDAVRSGAWKGYTGKPIKSIVNVGIGGSDLGPVMVTEALKPYGQENLELHFVSNIDGTHLAEALKKCDPETTLFLIASKTFTTAETCTNAKSAKDWFLASAKDPSHVAKHFVALSTNEKEVTAFGISAQNMFEFSDWVGGRYSVWSAIGLSVALYIGYENFEAFLSGAHAMDEYFCSTPLEKNIPALAALISIWYSDFFGAQTHLVAPYDQYLHRFPAYLQQLSMESNGKAITRSGDMVNYTTGKILWGEPGTNSQHSFFQLIHQGTKLIPADFLIPIESHNPIDNNKHHRMLFSNFAAQTEALMLGKTPAEVKAEGTPDEIVPHKTFVGNRPSNSIIAKKITPASLGALIAFYEWVTFTEGAVWNINSFDQFGVELGKKLAKNVLAQLETKGDVENHDSSTNGLINLFKNGF.

D-glucose 6-phosphate-binding positions include 164-165 (GS), 215-220 (SKTFTT), Gln-359, Glu-363, and His-394. The active-site Proton donor is Glu-363. The active site involves His-394. Thr-455 carries the phosphothreonine modification. Lys-516 contacts D-glucose 6-phosphate. The active site involves Lys-516.

Belongs to the GPI family. As to quaternary structure, homodimer.

Its subcellular location is the cytoplasm. It localises to the cytosol. The enzyme catalyses alpha-D-glucose 6-phosphate = beta-D-fructose 6-phosphate. It participates in carbohydrate degradation; glycolysis; D-glyceraldehyde 3-phosphate and glycerone phosphate from D-glucose: step 2/4. Its function is as follows. In the cytoplasm, catalyzes the conversion of glucose-6-phosphate to fructose-6-phosphate, the second step in glycolysis, and the reverse reaction during gluconeogenesis. This chain is Glucose-6-phosphate isomerase (pgi1), found in Schizosaccharomyces pombe (strain 972 / ATCC 24843) (Fission yeast).